Reading from the N-terminus, the 106-residue chain is UPF0060 membrane protein Bxeno_B1021 (106 aa).

The next 4 membrane-spanning stretches (helical) occupy residues 2–22 (KTFLLYAVTAVAEIVGCYLPW), 30–50 (SIWLLVPGALSLALFAWLLTL), 58–78 (VYAAYGGVYVAVAIAWLWCVD), and 82–102 (PTLWDAAGVVFTLAGMAIIAF).

It belongs to the UPF0060 family.

The protein localises to the cell inner membrane. This chain is UPF0060 membrane protein Bxeno_B1021, found in Paraburkholderia xenovorans (strain LB400).